A 171-amino-acid polypeptide reads, in one-letter code: Endoribonuclease YbeY (171 aa).

His-126, His-130, and His-136 together coordinate Zn(2+).

It belongs to the endoribonuclease YbeY family. The cofactor is Zn(2+).

The protein resides in the cytoplasm. In terms of biological role, single strand-specific metallo-endoribonuclease involved in late-stage 70S ribosome quality control and in maturation of the 3' terminus of the 16S rRNA. The sequence is that of Endoribonuclease YbeY from Rhizobium etli (strain CIAT 652).